Here is a 245-residue protein sequence, read N- to C-terminus: Small ribosomal subunit protein uS3 (245 aa).

The KH type-2 domain occupies 39–107; that stretch reads IRKAIREKLK…EVRVNLVEIR (69 aa). The segment at 216–245 is disordered; the sequence is DKRLETSGQSRARANTNQRGPASGAQAAGA. The segment covering 221–235 has biased composition (polar residues); that stretch reads TSGQSRARANTNQRG.

It belongs to the universal ribosomal protein uS3 family. As to quaternary structure, part of the 30S ribosomal subunit. Forms a tight complex with proteins S10 and S14.

Its function is as follows. Binds the lower part of the 30S subunit head. Binds mRNA in the 70S ribosome, positioning it for translation. The sequence is that of Small ribosomal subunit protein uS3 from Hyphomonas neptunium (strain ATCC 15444).